Here is a 282-residue protein sequence, read N- to C-terminus: HTH-type transcriptional activator RhaR (282 aa).

The region spanning 179-277 (DKLITALANS…GMTPSQWRHL (99 aa)) is the HTH araC/xylS-type domain. DNA-binding regions (H-T-H motif) lie at residues 196 to 217 (DAFCQQEQCSERVLRQQFRAQT) and 244 to 267 (ISEISMQCGFEDSNYFSVVFTRET).

As to quaternary structure, binds DNA as a dimer.

The protein localises to the cytoplasm. Functionally, activates expression of the rhaSR operon in response to L-rhamnose. This chain is HTH-type transcriptional activator RhaR, found in Salmonella typhimurium (strain LT2 / SGSC1412 / ATCC 700720).